The following is a 176-amino-acid chain: NADH-dependent flavin reductase (176 aa).

Residues 39–46 and 48–49 each bind FAD; these read EDSVHGMT and NA. An NAD(+)-binding site is contributed by S52. FAD contacts are provided by residues 63 to 65, 69 to 70, and 95 to 96; these read SIS, KM, and HF. NAD(+) contacts are provided by residues H137 and 157-160; that span reads FYTG.

Belongs to the non-flavoprotein flavin reductase family. In terms of assembly, homodimer. 4-nitrophenol 2-monooxygenase complex consists of an oxygenase component NphA1 and a flavin reductase component NphA2.

The catalysed reaction is a reduced flavin + NAD(+) = an oxidized flavin + NADH + 2 H(+). Catalyzes the reduction of FAD with the concomitant oxidation of NADH. NAD is the physiological electron donor. Subsequently, the reduced flavins diffuse to the oxygenase component NphA2. The chain is NADH-dependent flavin reductase (nphA2) from Rhodococcus sp.